A 330-amino-acid polypeptide reads, in one-letter code: Taste receptor type 2 member 136 (330 aa).

Residues 1–32 (MKSQPVTQELHFIFPLFKTISSDIMSFLVSIA) are Extracellular-facing. Residues 33–53 (GIAMLAQIVLGTFANVFIVLV) form a helical membrane-spanning segment. At 54–73 (TCTDCIRRRKLFLADGILTS) the chain is on the cytoplasmic side. The chain crosses the membrane as a helical span at residues 74-94 (LAFCRIGMLWVILISWCSIVF). Over 95 to 122 (HQALSLQVRFSICVGWAVTNHFNMWLAT) the chain is Extracellular. The chain crosses the membrane as a helical span at residues 123 to 143 (ILSILYLLKIGNFSNLIFLGL). Residues 144 to 149 (KRKIKS) lie on the Cytoplasmic side of the membrane. Residues 150–170 (VFIVVLLASLVLLFPNLITVT) traverse the membrane as a helical segment. The Extracellular portion of the chain corresponds to 171 to 201 (VCETVQANGYRGNLTGKTKRTYFMNLTAMIS). Residues N183 and N195 are each glycosylated (N-linked (GlcNAc...) asparagine). A helical transmembrane segment spans residues 202–222 (FTLDNIISFTISMVCFLLLIY). Over 223-248 (SLCKHLRTMRLYGKGPHNPSASAHIK) the chain is Cytoplasmic. A helical transmembrane segment spans residues 249 to 269 (ALQAVISFLLLFSMFILSLII). At 270-283 (SGYNYMKPLNEPVH) the chain is on the extracellular side. A helical membrane pass occupies residues 284-304 (LICQLIGTLYPSSHSYVLLWG). The Cytoplasmic portion of the chain corresponds to 305–330 (NRRIKLAFVLAMVQVRARLWLKEEKP).

It belongs to the G-protein coupled receptor T2R family.

Its subcellular location is the membrane. Putative taste receptor which may play a role in the perception of bitterness. The sequence is that of Taste receptor type 2 member 136 from Rattus norvegicus (Rat).